The primary structure comprises 1059 residues: DNA-directed RNA polymerase subunit beta (1059 aa).

It belongs to the RNA polymerase beta chain family. As to quaternary structure, in plastids the minimal PEP RNA polymerase catalytic core is composed of four subunits: alpha, beta, beta', and beta''. When a (nuclear-encoded) sigma factor is associated with the core the holoenzyme is formed, which can initiate transcription (Potential).

The protein resides in the plastid. It localises to the apicoplast. It carries out the reaction RNA(n) + a ribonucleoside 5'-triphosphate = RNA(n+1) + diphosphate. In terms of biological role, DNA-dependent RNA polymerase catalyzes the transcription of DNA into RNA using the four ribonucleoside triphosphates as substrates. This is DNA-directed RNA polymerase subunit beta (rpoB) from Eimeria tenella (Coccidian parasite).